The primary structure comprises 493 residues: Protein nucleotidyltransferase YdiU (493 aa).

ATP is bound by residues glycine 96, glycine 98, arginine 99, lysine 119, aspartate 131, glycine 132, arginine 182, and arginine 189. Aspartate 258 serves as the catalytic Proton acceptor. Mg(2+)-binding residues include asparagine 259 and aspartate 268. Residue aspartate 268 coordinates ATP. The segment at 471–493 (EKYTEFKNPPAPKERVSQTFCGT) is disordered.

Belongs to the SELO family. The cofactor is Mg(2+). Mn(2+) is required as a cofactor.

It catalyses the reaction L-seryl-[protein] + ATP = 3-O-(5'-adenylyl)-L-seryl-[protein] + diphosphate. It carries out the reaction L-threonyl-[protein] + ATP = 3-O-(5'-adenylyl)-L-threonyl-[protein] + diphosphate. The enzyme catalyses L-tyrosyl-[protein] + ATP = O-(5'-adenylyl)-L-tyrosyl-[protein] + diphosphate. The catalysed reaction is L-histidyl-[protein] + UTP = N(tele)-(5'-uridylyl)-L-histidyl-[protein] + diphosphate. It catalyses the reaction L-seryl-[protein] + UTP = O-(5'-uridylyl)-L-seryl-[protein] + diphosphate. It carries out the reaction L-tyrosyl-[protein] + UTP = O-(5'-uridylyl)-L-tyrosyl-[protein] + diphosphate. Nucleotidyltransferase involved in the post-translational modification of proteins. It can catalyze the addition of adenosine monophosphate (AMP) or uridine monophosphate (UMP) to a protein, resulting in modifications known as AMPylation and UMPylation. The chain is Protein nucleotidyltransferase YdiU from Nitrosococcus oceani (strain ATCC 19707 / BCRC 17464 / JCM 30415 / NCIMB 11848 / C-107).